Here is a 254-residue protein sequence, read N- to C-terminus: Chaperone protein PmfD (254 aa).

A signal peptide spans Met1–Ala26.

This sequence belongs to the periplasmic pilus chaperone family.

The protein localises to the periplasm. Its function is as follows. Involved in the biogenesis of the PMF fimbria. The polypeptide is Chaperone protein PmfD (pmfD) (Proteus mirabilis (strain HI4320)).